The sequence spans 520 residues: Glutamate decarboxylase-like protein FG08083 (520 aa).

86 to 88 (KLV) lines the substrate pocket. Lys300 carries the post-translational modification N6-(pyridoxal phosphate)lysine. A disordered region spans residues 338–357 (KNGVSSEQSANTNGSEKESW). Positions 340 to 351 (GVSSEQSANTNG) are enriched in polar residues. Arg492 serves as a coordination point for substrate.

The protein belongs to the group II decarboxylase family. It depends on pyridoxal 5'-phosphate as a cofactor.

The protein operates within mycotoxin biosynthesis. Glutamate decarboxylase-like protein; part of the gene cluster that mediates the biosynthesis of butenolide, a mycotoxin that shows antibiotic activity but does not seem to play a major role in the spread of head blight in wheat. Butenolide is derived from glutamic acid via a 4-acetamido-2-butenoic acid intermediate. The predicted function of the NADH:flavin oxidoreductase FG08077, the cytochrome P450 monooxygenase FG08079, the decarboxylase FG08083, and the putative acetyltransferase FG08082 are consistent with this pathway, however, the respective activities of the butelonide biosynthesis cluster enzymes have still to be experimentally determined. The polypeptide is Glutamate decarboxylase-like protein FG08083 (Gibberella zeae (strain ATCC MYA-4620 / CBS 123657 / FGSC 9075 / NRRL 31084 / PH-1) (Wheat head blight fungus)).